The sequence spans 202 residues: MSALVPPVLLASSSPSRGRLLSEAGVPFTAAAPGVDEQAIKASLKAEGVSARDAAIHLGEWKARRLSLAHPQALVIGGDQIAAIDDLWLDKPGSLATARQHLLLLRGRTHVLETAVVVLRDGQRLWHHLARPKMTMRSFSDAFLEDYLDRAGAGITACAGAYQIEGLGLQLFAAIEGDLFSIQGLPLLPLLDFLRPHGVLLS.

D79 (proton acceptor) is an active-site residue.

Belongs to the Maf family. It depends on a divalent metal cation as a cofactor.

The protein resides in the cytoplasm. It carries out the reaction a ribonucleoside 5'-triphosphate + H2O = a ribonucleoside 5'-phosphate + diphosphate + H(+). The enzyme catalyses a 2'-deoxyribonucleoside 5'-triphosphate + H2O = a 2'-deoxyribonucleoside 5'-phosphate + diphosphate + H(+). Nucleoside triphosphate pyrophosphatase. May have a dual role in cell division arrest and in preventing the incorporation of modified nucleotides into cellular nucleic acids. In Rhodospirillum rubrum (strain ATCC 11170 / ATH 1.1.1 / DSM 467 / LMG 4362 / NCIMB 8255 / S1), this protein is Nucleoside triphosphate pyrophosphatase.